A 193-amino-acid chain; its full sequence is Large ribosomal subunit protein uL5 (193 aa).

The protein belongs to the universal ribosomal protein uL5 family. In terms of assembly, part of the 50S ribosomal subunit; part of the 5S rRNA/L5/L18/L25 subcomplex. Contacts the 5S rRNA and the P site tRNA. Forms a bridge to the 30S subunit in the 70S ribosome.

This is one of the proteins that bind and probably mediate the attachment of the 5S RNA into the large ribosomal subunit, where it forms part of the central protuberance. In the 70S ribosome it contacts protein S13 of the 30S subunit (bridge B1b), connecting the 2 subunits; this bridge is implicated in subunit movement. Contacts the P site tRNA; the 5S rRNA and some of its associated proteins might help stabilize positioning of ribosome-bound tRNAs. This Corynebacterium urealyticum (strain ATCC 43042 / DSM 7109) protein is Large ribosomal subunit protein uL5.